Reading from the N-terminus, the 154-residue chain is Large ribosomal subunit protein uL13 (154 aa).

It belongs to the universal ribosomal protein uL13 family. As to quaternary structure, part of the 50S ribosomal subunit.

Functionally, this protein is one of the early assembly proteins of the 50S ribosomal subunit, although it is not seen to bind rRNA by itself. It is important during the early stages of 50S assembly. The polypeptide is Large ribosomal subunit protein uL13 (Rhizobium johnstonii (strain DSM 114642 / LMG 32736 / 3841) (Rhizobium leguminosarum bv. viciae)).